Reading from the N-terminus, the 378-residue chain is Probable 3-hydroxyisobutyryl-CoA hydrolase 3 (378 aa).

Residues glutamate 138 and aspartate 146 each contribute to the substrate site.

Belongs to the enoyl-CoA hydratase/isomerase family.

The protein resides in the peroxisome. It carries out the reaction 3-hydroxy-2-methylpropanoyl-CoA + H2O = 3-hydroxy-2-methylpropanoate + CoA + H(+). It functions in the pathway amino-acid degradation; L-valine degradation. In terms of biological role, involved in valine catabolism. The sequence is that of Probable 3-hydroxyisobutyryl-CoA hydrolase 3 from Arabidopsis thaliana (Mouse-ear cress).